Here is a 95-residue protein sequence, read N- to C-terminus: Putative defensin-like protein 262 (95 aa).

The first 26 residues, 1 to 26, serve as a signal peptide directing secretion; the sequence is MEKTSLKLIFLFSLTVIAFCSSLGDA. Intrachain disulfides connect C48/C95, C64/C83, C70/C91, and C74/C93.

It belongs to the DEFL family.

It localises to the secreted. This is Putative defensin-like protein 262 from Arabidopsis thaliana (Mouse-ear cress).